Here is a 702-residue protein sequence, read N- to C-terminus: Soluble guanylate cyclase gcy-31 (702 aa).

His104 contributes to the heme binding site. A coiled-coil region spans residues 368–406; sequence TQQSAELKLLLHQEAQKSRNMRENMNRLKKERRRTDKLL. In terms of domain architecture, Guanylate cyclase spans 435–564; that stretch reads TILFTDIVEF…ETVYVANKME (130 aa). Asp440 and Asp484 together coordinate Mg(2+). A disordered region spans residues 614–702; that stretch reads RHGPHRVPSP…QDLTPRKSIT (89 aa). The segment covering 633–643 has biased composition (acidic residues); the sequence is SQTEDDDDDEL. The span at 683–695 shows a compositional bias: polar residues; sequence RNSNKTPRQSQDL.

Belongs to the adenylyl cyclase class-4/guanylyl cyclase family. As to quaternary structure, heterodimer; with other soluble guanylate cyclases. It depends on heme as a cofactor. Expressed in a pair of bilaterally symmetric neurons in the head.

The protein resides in the cytoplasm. It carries out the reaction GTP = 3',5'-cyclic GMP + diphosphate. With respect to regulation, may be regulated by molecular oxygen. Probably not activated by nitric oxide (NO). Functionally, synthesizes cyclic GMP (cGMP) from GTP. May play a role in embryogenesis. In Caenorhabditis elegans, this protein is Soluble guanylate cyclase gcy-31 (gcy-31).